The sequence spans 123 residues: S-adenosylmethionine decarboxylase proenzyme 2 (123 aa).

S65 (schiff-base intermediate with substrate; via pyruvic acid) is an active-site residue. Residue S65 is modified to Pyruvic acid (Ser); by autocatalysis. The Proton acceptor; for processing activity role is filled by H70. The active-site Proton donor; for catalytic activity is the C85.

It belongs to the prokaryotic AdoMetDC family. Type 1 subfamily. As to quaternary structure, heterotetramer of two alpha and two beta chains arranged as a dimer of alpha/beta heterodimers. Pyruvate serves as cofactor. Post-translationally, is synthesized initially as an inactive proenzyme. Formation of the active enzyme involves a self-maturation process in which the active site pyruvoyl group is generated from an internal serine residue via an autocatalytic post-translational modification. Two non-identical subunits are generated from the proenzyme in this reaction, and the pyruvate is formed at the N-terminus of the alpha chain, which is derived from the carboxyl end of the proenzyme. The post-translation cleavage follows an unusual pathway, termed non-hydrolytic serinolysis, in which the side chain hydroxyl group of the serine supplies its oxygen atom to form the C-terminus of the beta chain, while the remainder of the serine residue undergoes an oxidative deamination to produce ammonia and the pyruvoyl group blocking the N-terminus of the alpha chain.

The enzyme catalyses S-adenosyl-L-methionine + H(+) = S-adenosyl 3-(methylsulfanyl)propylamine + CO2. The protein operates within amine and polyamine biosynthesis; S-adenosylmethioninamine biosynthesis; S-adenosylmethioninamine from S-adenosyl-L-methionine: step 1/1. Its function is as follows. Catalyzes the decarboxylation of S-adenosylmethionine to S-adenosylmethioninamine (dcAdoMet), the propylamine donor required for the synthesis of the polyamines spermine and spermidine from the diamine putrescine. The sequence is that of S-adenosylmethionine decarboxylase proenzyme 2 from Bacillus cereus (strain ZK / E33L).